The chain runs to 202 residues: Large ribosomal subunit protein bL17 (202 aa).

Residues D132 to K202 are disordered. Low complexity predominate over residues A134–T168. A compositionally biased stretch (acidic residues) spans A169 to T193.

It belongs to the bacterial ribosomal protein bL17 family. As to quaternary structure, part of the 50S ribosomal subunit. Contacts protein L32.

The chain is Large ribosomal subunit protein bL17 from Mycolicibacterium vanbaalenii (strain DSM 7251 / JCM 13017 / BCRC 16820 / KCTC 9966 / NRRL B-24157 / PYR-1) (Mycobacterium vanbaalenii).